Reading from the N-terminus, the 309-residue chain is NAD kinase (309 aa).

The active-site Proton acceptor is D89. NAD(+) contacts are provided by residues 89–90, 163–164, H174, R191, D193, and 204–209; these read DG, NE, and TAYALS.

Belongs to the NAD kinase family. It depends on a divalent metal cation as a cofactor.

It is found in the cytoplasm. The enzyme catalyses NAD(+) + ATP = ADP + NADP(+) + H(+). Its function is as follows. Involved in the regulation of the intracellular balance of NAD and NADP, and is a key enzyme in the biosynthesis of NADP. Catalyzes specifically the phosphorylation on 2'-hydroxyl of the adenosine moiety of NAD to yield NADP. This is NAD kinase from Shewanella baltica (strain OS155 / ATCC BAA-1091).